The chain runs to 289 residues: Ribosomal protein L11 methyltransferase (289 aa).

4 residues coordinate S-adenosyl-L-methionine: threonine 142, glycine 163, aspartate 185, and asparagine 226.

This sequence belongs to the methyltransferase superfamily. PrmA family.

The protein resides in the cytoplasm. The catalysed reaction is L-lysyl-[protein] + 3 S-adenosyl-L-methionine = N(6),N(6),N(6)-trimethyl-L-lysyl-[protein] + 3 S-adenosyl-L-homocysteine + 3 H(+). Functionally, methylates ribosomal protein L11. This chain is Ribosomal protein L11 methyltransferase, found in Legionella pneumophila (strain Paris).